The following is a 509-amino-acid chain: Cytochrome P450 4A10 (509 aa).

The next 2 helical transmembrane spans lie at 11-31 and 121-141; these read FTGS…LLLL and LLAP…WFQH. Glutamate 320 contributes to the heme binding site. Position 439 is a phosphoserine (serine 439). A heme-binding site is contributed by cysteine 456.

This sequence belongs to the cytochrome P450 family. Heme serves as cofactor. As to expression, expressed in liver (at protein level) and kidney (at protein level).

The protein resides in the endoplasmic reticulum membrane. The protein localises to the microsome membrane. It carries out the reaction an omega-methyl-long-chain fatty acid + reduced [NADPH--hemoprotein reductase] + O2 = an omega-hydroxy-long-chain fatty acid + oxidized [NADPH--hemoprotein reductase] + H2O + H(+). The enzyme catalyses dodecanoate + reduced [NADPH--hemoprotein reductase] + O2 = 12-hydroxydodecanoate + oxidized [NADPH--hemoprotein reductase] + H2O + H(+). It catalyses the reaction dodecanoate + reduced [NADPH--hemoprotein reductase] + O2 = 11-hydroxydodecanoate + oxidized [NADPH--hemoprotein reductase] + H2O + H(+). The catalysed reaction is tetradecanoate + reduced [NADPH--hemoprotein reductase] + O2 = 14-hydroxytetradecanoate + oxidized [NADPH--hemoprotein reductase] + H2O + H(+). It carries out the reaction hexadecanoate + reduced [NADPH--hemoprotein reductase] + O2 = 16-hydroxyhexadecanoate + oxidized [NADPH--hemoprotein reductase] + H2O + H(+). The enzyme catalyses (9Z)-octadecenoate + reduced [NADPH--hemoprotein reductase] + O2 = 18-hydroxy-(9Z)-octadecenoate + oxidized [NADPH--hemoprotein reductase] + H2O + H(+). It catalyses the reaction (9Z,12Z)-octadecadienoate + reduced [NADPH--hemoprotein reductase] + O2 = 18-hydroxy-(9Z,12Z)-octadecadienoate + oxidized [NADPH--hemoprotein reductase] + H2O + H(+). The catalysed reaction is (9Z,12Z)-octadecadienoate + reduced [NADPH--hemoprotein reductase] + O2 = 17-hydroxy-(9Z,12Z)-octadecadienoate + oxidized [NADPH--hemoprotein reductase] + H2O + H(+). It carries out the reaction (5Z,8Z,11Z,14Z)-eicosatetraenoate + reduced [NADPH--hemoprotein reductase] + O2 = 20-hydroxy-(5Z,8Z,11Z,14Z)-eicosatetraenoate + oxidized [NADPH--hemoprotein reductase] + H2O + H(+). The enzyme catalyses 8,9-epoxy-(5Z,11Z,14Z)-eicosatrienoate + reduced [NADPH--hemoprotein reductase] + O2 = 20-hydroxy-8,9-epoxy-(5Z,11Z,14Z)-eicosatrienoate + oxidized [NADPH--hemoprotein reductase] + H2O + H(+). Functionally, a cytochrome P450 monooxygenase involved in the metabolism of fatty acids. Catalyzes predominantly the oxidation of the terminal carbon (omega-oxidation) of long-chain fatty acids. Acts as a major omega-hydroxylase for dodecanoic (lauric) acid in liver. In kidney, may play an important role in omega-hydroxylation of (5Z,8Z,11Z,14Z)-eicosatetraenoic acid (arachidonate) to 20-hydroxyeicosatetraenoic acid (20-HETE), a signaling molecule acting both as vasoconstrictive and natriuretic with overall effect on arterial blood pressure. Also participates in the formation of anti-inflammatory hydroxyepoxyeicosatrienoic acids (HEETs) in kidney by converting 8,9-epoxyeicosatrienoic acid (EET) to 20,8,9-HEET, an activator of PPARA. Displays substantially lower fatty acid omega-1 hydroxylase activity. Mechanistically, uses molecular oxygen inserting one oxygen atom into a substrate, and reducing the second into a water molecule, with two electrons provided by NADPH via cytochrome P450 reductase (CPR; NADPH-ferrihemoprotein reductase). The polypeptide is Cytochrome P450 4A10 (Cyp4a10) (Rattus norvegicus (Rat)).